Here is a 121-residue protein sequence, read N- to C-terminus: Small ribosomal subunit protein uS13 (121 aa).

The interval 91-121 (HRMSLPVRGQRTRTNARTRRGSRKTVAGRKK) is disordered. Positions 100 to 121 (QRTRTNARTRRGSRKTVAGRKK) are enriched in basic residues.

This sequence belongs to the universal ribosomal protein uS13 family. Part of the 30S ribosomal subunit. Forms a loose heterodimer with protein S19. Forms two bridges to the 50S subunit in the 70S ribosome.

Functionally, located at the top of the head of the 30S subunit, it contacts several helices of the 16S rRNA. In the 70S ribosome it contacts the 23S rRNA (bridge B1a) and protein L5 of the 50S subunit (bridge B1b), connecting the 2 subunits; these bridges are implicated in subunit movement. Contacts the tRNAs in the A and P-sites. The chain is Small ribosomal subunit protein uS13 from Prochlorococcus marinus (strain MIT 9301).